Consider the following 689-residue polypeptide: Glycine--tRNA ligase beta subunit (689 aa).

The protein belongs to the class-II aminoacyl-tRNA synthetase family. As to quaternary structure, tetramer of two alpha and two beta subunits.

The protein localises to the cytoplasm. The catalysed reaction is tRNA(Gly) + glycine + ATP = glycyl-tRNA(Gly) + AMP + diphosphate. This Oenococcus oeni (strain ATCC BAA-331 / PSU-1) protein is Glycine--tRNA ligase beta subunit.